The following is a 344-amino-acid chain: N-acetyl-gamma-glutamyl-phosphate reductase (344 aa).

Cys149 is a catalytic residue.

This sequence belongs to the NAGSA dehydrogenase family. Type 1 subfamily.

The protein resides in the cytoplasm. The catalysed reaction is N-acetyl-L-glutamate 5-semialdehyde + phosphate + NADP(+) = N-acetyl-L-glutamyl 5-phosphate + NADPH + H(+). Its pathway is amino-acid biosynthesis; L-arginine biosynthesis; N(2)-acetyl-L-ornithine from L-glutamate: step 3/4. Functionally, catalyzes the NADPH-dependent reduction of N-acetyl-5-glutamyl phosphate to yield N-acetyl-L-glutamate 5-semialdehyde. In Thermoanaerobacter pseudethanolicus (strain ATCC 33223 / 39E) (Clostridium thermohydrosulfuricum), this protein is N-acetyl-gamma-glutamyl-phosphate reductase.